A 53-amino-acid chain; its full sequence is UPF0391 membrane protein PputGB1_0151 (53 aa).

The next 2 membrane-spanning stretches (helical) occupy residues 4-24 (WAIT…GGIA) and 29-49 (GIAK…FFFG).

Belongs to the UPF0391 family.

The protein localises to the cell membrane. In Pseudomonas putida (strain GB-1), this protein is UPF0391 membrane protein PputGB1_0151.